The sequence spans 374 residues: Putative glutamate--cysteine ligase 2-1 (374 aa).

It belongs to the glutamate--cysteine ligase type 2 family. YbdK subfamily.

The enzyme catalyses L-cysteine + L-glutamate + ATP = gamma-L-glutamyl-L-cysteine + ADP + phosphate + H(+). ATP-dependent carboxylate-amine ligase which exhibits weak glutamate--cysteine ligase activity. This is Putative glutamate--cysteine ligase 2-1 from Saccharopolyspora erythraea (strain ATCC 11635 / DSM 40517 / JCM 4748 / NBRC 13426 / NCIMB 8594 / NRRL 2338).